Consider the following 315-residue polypeptide: MEARAQSGSGSQPLLQAPRDSGRQRGEPDPRDALPQQVHVLSLDQIRAIRNTNEYTEGPTVLPRAGLKPAPRPTAQHKHERLHGLPEPRQPSRPQHPPAHPSARASLARSISTVSSGSRSSTRTSTSSSSSEQRLLGSSFSSGPLADRIIRVQPKSELKPGELKPLSKEDVGLHAYKCEDCGKCKCKECTYPRPLPSDWICDKQCLCSAQNVIDYGTCVCCVKGLFYHCSNDDEDNCADNPCSCSQSHCCTRWSAMGVMSLFLPCLWCYLPAKGCLKLCQGCYDRVNRPGCRCKNSNTVCCKVPTVPPRNFEKPT.

Positions 1-14 (MEARAQSGSGSQPL) are enriched in polar residues. Disordered stretches follow at residues 1 to 38 (MEARAQSGSGSQPLLQAPRDSGRQRGEPDPRDALPQQV) and 51 to 140 (NTNE…GSSF). The span at 20-32 (DSGRQRGEPDPRD) shows a compositional bias: basic and acidic residues. The segment covering 88 to 100 (PRQPSRPQHPPAH) has biased composition (pro residues). Low complexity predominate over residues 109–140 (RSISTVSSGSRSSTRTSTSSSSSEQRLLGSSF). The segment at 118–315 (SRSSTRTSTS…VPPRNFEKPT (198 aa)) is required for interaction with CAV1. Residues 177-291 (KCEDCGKCKC…CYDRVNRPGC (115 aa)) form the SPR domain. Residues 178 to 315 (CEDCGKCKCK…VPPRNFEKPT (138 aa)) are required for interaction with TESK1.

Belongs to the sprouty family. As to quaternary structure, forms heterodimers with SPRY1. Forms a tripartite complex containing GAB1, METTL13 and SPRY2. Within the complex interacts with METTL13. Interacts with RAF1. Interacts (via C-terminus) with TESK1 (via C-terminus); the interaction disrupts SPRY2 interaction with GRB2, potentially via disruption of SPRY2 serine dephosphorylation. Interacts with PPP2R1A/PP2A-A and PPP2CA/PP2A-C; the interaction with PPP2CA/PP2A-C is inhibited by interaction with TESK1, possibly by vesicular sequestration of SPRY2. Inhibition of the interaction with the serine/threonine-protein phosphatase 2A (PP2A) holoenzyme results in loss of PP2A-mediated dephosphorylation, resulting in the loss of SPRY2 interaction with GRB2. Interacts with GRB2. Interacts with CBL/C-CBL; the interaction inhibits CBL-mediated ubiquitination of EGFR. Interacts (via C-terminus) with CAV1 (via C-terminus). Cleaved at Pro-144 by the prolyl endopeptidase FAP (seprase) activity (in vitro).

It is found in the cytoplasm. The protein resides in the cytoskeleton. It localises to the cell projection. The protein localises to the ruffle membrane. Functionally, antagonist of fibroblast growth factor (FGF) pathways via inhibition of FGF-mediated phosphorylation of ERK1/2. Thereby acts as an antagonist of FGF-induced retinal lens fiber differentiation, may inhibit limb bud outgrowth and may negatively modulate respiratory organogenesis. Inhibits TGFB-induced epithelial-to-mesenchymal transition in retinal lens epithelial cells. Inhibits CBL/C-CBL-mediated EGFR ubiquitination. The chain is Protein sprouty homolog 2 (SPRY2) from Bos taurus (Bovine).